Reading from the N-terminus, the 69-residue chain is UPF0434 protein Rmet_0534 (69 aa).

The protein belongs to the UPF0434 family.

This chain is UPF0434 protein Rmet_0534, found in Cupriavidus metallidurans (strain ATCC 43123 / DSM 2839 / NBRC 102507 / CH34) (Ralstonia metallidurans).